The primary structure comprises 706 residues: Histone deacetylase HDA1 (706 aa).

Positions 1 to 24 are enriched in basic and acidic residues; sequence MDSVMVKKEVLENPDHDLKRKLEE. A disordered region spans residues 1–36; the sequence is MDSVMVKKEVLENPDHDLKRKLEENKEEENSLSTTS. Positions 67-396 are histone deacetylase; sequence RYHAKIFTSY…ALSVAKVLIG (330 aa). His-206 is an active-site residue.

This sequence belongs to the histone deacetylase family. HD type 2 subfamily.

It is found in the nucleus. It carries out the reaction N(6)-acetyl-L-lysyl-[histone] + H2O = L-lysyl-[histone] + acetate. Responsible for the deacetylation of lysine residues on the N-terminal part of the core histones (H2A, H2B, H3 and H4). Histone deacetylation gives a tag for epigenetic repression and plays an important role in transcriptional regulation, cell cycle progression and developmental events. Histone deacetylases act via the formation of large multiprotein complexes. The chain is Histone deacetylase HDA1 (HDA1) from Saccharomyces cerevisiae (strain ATCC 204508 / S288c) (Baker's yeast).